We begin with the raw amino-acid sequence, 76 residues long: Protein sprouty homolog 1 (76 aa).

An SPR domain is found at 1–52; sequence NPCSCSQSHCCSRYLCMGAMSLFLPCLLCYPPAKGCLKLCRGCYDRVNRPGC.

Belongs to the sprouty family. Brain and interlimb region.

Its subcellular location is the cytoplasm. The protein resides in the membrane. Inhibits fibroblast growth factor (FGF)-induced retinal lens fiber differentiation. Inhibits TGFB-induced epithelial-to-mesenchymal transition in lens epithelial cells. This Gallus gallus (Chicken) protein is Protein sprouty homolog 1 (SPRY1).